Here is a 139-residue protein sequence, read N- to C-terminus: ATP synthase epsilon chain 2 (139 aa).

The protein belongs to the ATPase epsilon chain family. F-type ATPases have 2 components, CF(1) - the catalytic core - and CF(0) - the membrane proton channel. CF(1) has five subunits: alpha(3), beta(3), gamma(1), delta(1), epsilon(1). CF(0) has three main subunits: a, b and c.

It is found in the cell inner membrane. Produces ATP from ADP in the presence of a proton gradient across the membrane. This is ATP synthase epsilon chain 2 from Paraburkholderia xenovorans (strain LB400).